We begin with the raw amino-acid sequence, 1029 residues long: MKFYALFIYRPVATILLSIAVTLCGVLGFRLLPVAPLPQVDFPVIMVSASLPGASPETMASSVATPLERSLGRIAGVNEMTSTSSLGSTRIILEFNFDRDINGAARDVQAAINAAQSLLPSGMPSRPTYRKANPSDAPIMILTLTSDTFSQGELYDYASTQLAQTIAQIDGVGDVDVGGSSLPAVRVALNPQALFNQGVSLDTVRSAISNANVRRPQGAIEDAQRRWQLQTNDELKTAAEYEPLIVHYNNGAAVHLRDVATVTDSVQDVRNAGMTNAKPAILLMIRKLPEANIIETVDRIRAALPELRDTIPAAIDMQIAQDRSPTIRASLAEVEQSLAISVGLVILVVFLFLRSGRATLIPAVAVPVSLIGTFAAMYLCGFSLNNLSLMALTIATGFVVDDAIVALENISRHLEAGVKPLQAALQGVREVGFTVLSMSLSLVAVFLPLLLMGGLPGRLFREFAVTLSVAIGISLVVSLTLTPMMCGWLLKAKPSEETRSRVGINRLLLALQGGYARSLGWVLNHARLVGLVLLATIALNVWLYISIPKTFFPEQDTGRLMGGIQADQSISFQAMRGKLQDFMKIIREDPAVDNVTGFTGGSRVNSGMMFISLKPLGERTESAQQVIDRLRKKLAREPGASLFLMAVQDIRVGGRQSNASYQYTLLSDDLAALREWEPKIRQALAKLPQLADVNSDQQDNGAEMSLVYDRESMARLGISVQDANSLLNNAFGQRQISTIYQPLNQYKVVMEVDPRYTQDISALDQMFVMNSEGKPIPLSWFAKWQPANAPLSVNHQGLSAASTIAFNLPTGVSLSEASDAITRTMTSLGVPSSVRGSFAGTAQVFQETMNSQVILILAAIATVYIVLGMLYESYVHPLTILSTLPSAGVGALLALEAFDAPFSLIALIGIMLLIGIVKKNAIMMVDFALEAQRSGQLSARDAIFQACLLRFRPIMMTTLAALFGALPLMIASGDGAELRQPLGITIVGGLVMSQLLTLYTTPVVYLFFDRLRLRFTRRAKPEDTLTASE.

Helical transmembrane passes span 15-35 (ILLSIAVTLCGVLGFRLLPVA), 333-353 (EVEQSLAISVGLVILVVFLFL), 360-380 (LIPAVAVPVSLIGTFAAMYLC), 387-407 (LSLMALTIATGFVVDDAIVAL), 431-451 (VGFTVLSMSLSLVAVFLPLLL), 469-489 (VAIGISLVVSLTLTPMMCGWL), 528-548 (LVGLVLLATIALNVWLYISIP), 853-873 (VILILAAIATVYIVLGMLYES), 897-917 (AFDAPFSLIALIGIMLLIGIV), 953-973 (PIMMTTLAALFGALPLMIASG), and 984-1004 (ITIVGGLVMSQLLTLYTTPVV).

This sequence belongs to the resistance-nodulation-cell division (RND) (TC 2.A.6) family. MdtC subfamily. In terms of assembly, part of a tripartite efflux system composed of MdtA, MdtB and MdtC. MdtC forms a heteromultimer with MdtB.

The protein resides in the cell inner membrane. The polypeptide is Multidrug resistance protein MdtC (Cronobacter sakazakii (strain ATCC BAA-894) (Enterobacter sakazakii)).